The primary structure comprises 113 residues: Small ribosomal subunit protein bS6 (113 aa).

The protein belongs to the bacterial ribosomal protein bS6 family.

Binds together with bS18 to 16S ribosomal RNA. The protein is Small ribosomal subunit protein bS6 of Pseudoalteromonas translucida (strain TAC 125).